A 513-amino-acid chain; its full sequence is GMP synthase [glutamine-hydrolyzing] (513 aa).

The Glutamine amidotransferase type-1 domain occupies 7–197; that stretch reads TILVLDFGGQ…LFGVCGCTGE (191 aa). Cys-84 functions as the Nucleophile in the catalytic mechanism. Catalysis depends on residues His-171 and Glu-173. In terms of domain architecture, GMPS ATP-PPase spans 198–387; sequence WTMENFIEEQ…LGLPEDIVWR (190 aa). 225–231 is an ATP binding site; the sequence is SGGVDSS.

In terms of assembly, homodimer.

It carries out the reaction XMP + L-glutamine + ATP + H2O = GMP + L-glutamate + AMP + diphosphate + 2 H(+). Its pathway is purine metabolism; GMP biosynthesis; GMP from XMP (L-Gln route): step 1/1. Functionally, catalyzes the synthesis of GMP from XMP. The sequence is that of GMP synthase [glutamine-hydrolyzing] from Heliobacterium modesticaldum (strain ATCC 51547 / Ice1).